The chain runs to 1396 residues: DNA-directed RNA polymerase subunit beta' (1396 aa).

Residues Cys-72, Cys-74, Cys-87, and Cys-90 each contribute to the Zn(2+) site. Asp-463, Asp-465, and Asp-467 together coordinate Mg(2+). Positions 814, 889, 896, and 899 each coordinate Zn(2+).

It belongs to the RNA polymerase beta' chain family. In terms of assembly, the RNAP catalytic core consists of 2 alpha, 1 beta, 1 beta' and 1 omega subunit. When a sigma factor is associated with the core the holoenzyme is formed, which can initiate transcription. Mg(2+) serves as cofactor. It depends on Zn(2+) as a cofactor.

The enzyme catalyses RNA(n) + a ribonucleoside 5'-triphosphate = RNA(n+1) + diphosphate. In terms of biological role, DNA-dependent RNA polymerase catalyzes the transcription of DNA into RNA using the four ribonucleoside triphosphates as substrates. The chain is DNA-directed RNA polymerase subunit beta' from Chlamydia trachomatis serovar L2b (strain UCH-1/proctitis).